The following is a 190-amino-acid chain: Histone H5 (190 aa).

Residues 1-29 form a disordered region; it reads MTESLVLSPAPAKPKRVKASRRSASHPTY. The span at 13-24 shows a compositional bias: basic residues; it reads KPKRVKASRRSA. Ser-23, Ser-30, Ser-146, and Ser-167 each carry phosphoserine. Residues 25-98 form the H15 domain; sequence SHPTYSEMIA…GASGSFRLAK (74 aa). A disordered region spans residues 87–190; it reads GVGASGSFRL…SGARKSPKKK (104 aa). Basic residues predominate over residues 104-190; that stretch reads RSPGKKKKAV…SGARKSPKKK (87 aa).

This sequence belongs to the histone H1/H5 family. Erythroid cells.

Its subcellular location is the nucleus. The protein resides in the chromosome. Functionally, histone H5 performs the same function as H1, being necessary for the condensation of nucleosome chains into higher order structures, and replaces histone H1 in certain cells. The chain is Histone H5 from Gallus gallus (Chicken).